A 147-amino-acid polypeptide reads, in one-letter code: MNRNDVTEKIITVKVSKGIQWADVAKKVGLSKEWTTAACLGQMTLDDKQAKVIGKIFGLTAEEQKWLQVVPYKGSLPTPVPTDPLIYRWYEVVSVYGTTIKELIHEEFGDGIMSAIDFSMDIQRQADPKGDRVNVVLSGKFLPYKTY.

Residues Arg88, Glu91, and Ser114 contribute to the active site.

Belongs to the cyanase family.

It catalyses the reaction cyanate + hydrogencarbonate + 3 H(+) = NH4(+) + 2 CO2. Functionally, catalyzes the reaction of cyanate with bicarbonate to produce ammonia and carbon dioxide. In Variovorax paradoxus (strain S110), this protein is Cyanate hydratase.